Here is a 1074-residue protein sequence, read N- to C-terminus: Zinc finger protein 518B (1074 aa).

A compositionally biased stretch (polar residues) spans 12–24; sequence HLNGGHNSLTMSP. The interval 12-36 is disordered; the sequence is HLNGGHNSLTMSPKQPDANGAPRPN. 2 C2H2-type zinc fingers span residues 162–184 and 190–213; these read FICS…LVKH and YQCE…KRVH. Residues lysine 482, lysine 491, and lysine 558 each participate in a glycyl lysine isopeptide (Lys-Gly) (interchain with G-Cter in SUMO2) cross-link. The tract at residues 568–590 is disordered; it reads SNRKQEDNQTEEHKAVSTVGQIS. The segment covering 570-582 has biased composition (basic and acidic residues); that stretch reads RKQEDNQTEEHKA. Lysine 594 is covalently cross-linked (Glycyl lysine isopeptide (Lys-Gly) (interchain with G-Cter in SUMO2)). 2 disordered regions span residues 603-632 and 678-704; these read TGED…DGPV and KPSS…KATS. Over residues 604–622 the composition is skewed to basic and acidic residues; that stretch reads GEDRSQQPGDKPLELKNSE. A compositionally biased stretch (polar residues) spans 693–704; that stretch reads GQASKGTSKATS. Residues lysine 809, lysine 846, and lysine 860 each participate in a glycyl lysine isopeptide (Lys-Gly) (interchain with G-Cter in SUMO2) cross-link. The segment at 1036 to 1058 adopts a C2H2-type 3 zinc-finger fold; the sequence is FKCWFCGRLYEDQEEWMSHGQRH.

It belongs to the krueppel C2H2-type zinc-finger protein family.

It localises to the nucleus. Through its association with the EHMT1-EHMT2/G9A and PRC2/EED-EZH2 histone methyltransferase complexes may function in gene silencing, regulating repressive post-translational methylation of histone tails at promoters of target genes. In Homo sapiens (Human), this protein is Zinc finger protein 518B (ZNF518B).